Reading from the N-terminus, the 83-residue chain is Mu-theraphotoxin-Hhn2i (83 aa).

The first 21 residues, 1–21, serve as a signal peptide directing secretion; sequence MKASMFLALAGLVLLFVVGYA. The propeptide occupies 22-48; it reads SESEEKEFPRELLSKIFAVDDFKGEER. 3 disulfides stabilise this stretch: cysteine 50-cysteine 65, cysteine 57-cysteine 70, and cysteine 64-cysteine 77. Leucine 81 carries the post-translational modification Leucine amide.

Belongs to the neurotoxin 10 (Hwtx-1) family. 15 (Hntx-3) subfamily. As to quaternary structure, monomer. Expressed by the venom gland.

Its subcellular location is the secreted. Its function is as follows. Lethal neurotoxin. Selectively blocks tetrodotoxin-sensitive voltage-gated sodium channels (Nav). Does not affect tetrodotoxin-resistant voltage-gated sodium channels or calcium channels. This Cyriopagopus hainanus (Chinese bird spider) protein is Mu-theraphotoxin-Hhn2i.